Here is a 118-residue protein sequence, read N- to C-terminus: Transcription factor PAR2 (118 aa).

Residues Met-1–Val-59 form a disordered region. The span at Ser-19–Asn-30 shows a compositional bias: polar residues. Positions Ser-43–Leu-92 constitute a bHLH domain. Positions Thr-47–Val-59 are enriched in acidic residues.

The protein belongs to the bHLH protein family. Homodimer.

The protein localises to the nucleus. Atypical bHLH transcription factor that acts as a negative regulator of a variety of shade avoidance syndrome (SAS) responses, including seedling elongation and photosynthetic pigment accumulation. Acts as a direct transcriptional repressor of two auxin-responsive genes, SAUR15 and SAUR68. May function in integrating shade and hormone transcriptional networks in response to light and auxin changes. The sequence is that of Transcription factor PAR2 (PAR2) from Arabidopsis thaliana (Mouse-ear cress).